The primary structure comprises 160 residues: Cytochrome b6-f complex subunit 4 (160 aa).

Transmembrane regions (helical) follow at residues L36–V56, L95–E115, and T131–I151.

Belongs to the cytochrome b family. PetD subfamily. In terms of assembly, the 4 large subunits of the cytochrome b6-f complex are cytochrome b6, subunit IV (17 kDa polypeptide, PetD), cytochrome f and the Rieske protein, while the 4 small subunits are PetG, PetL, PetM and PetN. The complex functions as a dimer.

It localises to the cellular thylakoid membrane. Its function is as follows. Component of the cytochrome b6-f complex, which mediates electron transfer between photosystem II (PSII) and photosystem I (PSI), cyclic electron flow around PSI, and state transitions. The sequence is that of Cytochrome b6-f complex subunit 4 from Gloeothece citriformis (strain PCC 7424) (Cyanothece sp. (strain PCC 7424)).